Consider the following 284-residue polypeptide: MASGARYAGKVVVVTGAARGIGAGIARAFVDSGAQVVICDKDERGGRALEQELRGAVFIRCDVTREEDVRALLSDTVHRFGRLDCVVNNAGSHPPLQPLEETTAQGFRELLELNLLGTYTLCKLAFPHLRRSRGNIINISTLVGAVGQLQGVPYAATKGAVTALTKALALDESQYGVRVNCISPGNIWTPLWQELAALAPDPRAAIREGAMAQPLGRMGQPAEVGAAAVFLASEASFCTGLELFVTGGAELGSGPENFFRSLGLCVVPEDVPPPTSRPRICSYK.

NAD(+) contacts are provided by Arg19, Ile21, Asp40, Lys41, Asp62, Val63, Asn89, Tyr154, Lys158, Ile187, Thr189, and Leu191.

Belongs to the short-chain dehydrogenases/reductases (SDR) family.

It catalyses the reaction L-fucose + NAD(+) = L-fucono-1,5-lactone + NADH + H(+). The enzyme catalyses D-arabinose + NAD(+) = D-arabinono-1,5-lactone + NADH + H(+). The catalysed reaction is L-galactose + NAD(+) = L-galactono-1,5-lactone + NADH + H(+). It participates in carbohydrate degradation; L-fucose degradation. Functionally, catalyzes the NAD(+)-dependent oxidation of L-fucose, yielding L-fucono-1,5-lactone, which rapidly converts spontaneously to L-fucone-1,4-lactone. Can also act on D-arabinose and L-galactose, with lower catalytic efficiency. Does not use NADPH. May be the initial enzyme of the putative L-fucose degradation pathway in mammals. The polypeptide is L-fucose dehydrogenase (HSD17B14) (Oryctolagus cuniculus (Rabbit)).